The primary structure comprises 459 residues: Argininosuccinate lyase (459 aa).

This sequence belongs to the lyase 1 family. Argininosuccinate lyase subfamily.

The protein localises to the cytoplasm. The enzyme catalyses 2-(N(omega)-L-arginino)succinate = fumarate + L-arginine. It participates in amino-acid biosynthesis; L-arginine biosynthesis; L-arginine from L-ornithine and carbamoyl phosphate: step 3/3. This Prochlorococcus marinus (strain MIT 9515) protein is Argininosuccinate lyase.